Here is a 27-residue protein sequence, read N- to C-terminus: Phospholipase A2 P-elapitoxin-Aa1a alpha chain (27 aa).

This sequence belongs to the phospholipase A2 family. Group I subfamily. Heterotrimer of alpha, beta and gamma chains, each related to PLA2. Requires Ca(2+) as cofactor. Expressed by the venom gland.

The protein resides in the secreted. The enzyme catalyses a 1,2-diacyl-sn-glycero-3-phosphocholine + H2O = a 1-acyl-sn-glycero-3-phosphocholine + a fatty acid + H(+). Heterotrimer: presynaptic neurotoxin. Inhibits nerve-evoked twitch contractions but not responses to cholinergic agonists acetylcholine and carbachol and to depolarizing agonist KCl. Causes a fade in tetanic contractions. Displays a triphasic mode of action with depression, enhancement and blockade of neurotransmission. Does not display myotoxic activity such as changes in baseline muscle tension or inhibition of directly stimulated muscle twitches. All subunits are necessary for maximum toxicity. Its function is as follows. Monomer: Snake venom phospholipase A2 (PLA2) alpha chain that has enzymatic activity. PLA2 catalyzes the calcium-dependent hydrolysis of the 2-acyl groups in 3-sn-phosphoglycerides. This chain is Phospholipase A2 P-elapitoxin-Aa1a alpha chain, found in Acanthophis antarcticus (Common death adder).